Consider the following 113-residue polypeptide: Large ribosomal subunit protein P1 (113 aa).

Low complexity predominate over residues 56 to 66; it reads TAAAAPAPAAG. The interval 56 to 113 is disordered; sequence TAAAAPAPAAGGSAGGEVEAADDDDEEDAEEEAADEGGDDDGDDDEEADGEGLGALFG. Acidic residues predominate over residues 74–105; sequence EAADDDDEEDAEEEAADEGGDDDGDDDEEADG.

Belongs to the eukaryotic ribosomal protein P1/P2 family. In terms of assembly, part of the 50S ribosomal subunit. Homodimer, it forms part of the ribosomal stalk which helps the ribosome interact with GTP-bound translation factors. Forms a heptameric uL10/P0(P1)2(P1)2(P1)2 complex, where uL10/P0 forms an elongated spine to which the P1 dimers bind in a sequential fashion.

Functionally, forms part of the ribosomal stalk, playing a central role in the interaction of the ribosome with GTP-bound translation factors. This is Large ribosomal subunit protein P1 from Haloferax volcanii (strain ATCC 29605 / DSM 3757 / JCM 8879 / NBRC 14742 / NCIMB 2012 / VKM B-1768 / DS2) (Halobacterium volcanii).